The following is a 256-amino-acid chain: Nuclear shuttle protein (256 aa).

Positions 18–39 (NTTNRFPIRRKYVGGHTRPSVR) match the Bipartite nuclear localization signal motif. The Nuclear localization signal signature appears at 81–96 (SRGPSGDGRSRDYIKL). Residues 150 to 187 (ELFGAYSACYVNLRLLNNQQHRYRVLHSVKRFVSSAGD) are interaction with Arabidopsis thaliana NSI protein.

The protein belongs to the begomovirus nuclear shuttle protein family. As to quaternary structure, binds to single-stranded and double-stranded viral DNA. Interacts with the host nuclear shuttle interacting (NSI) protein. This interaction may allow NSP to recruit NSI monomers to the viral genome and thus regulate nuclear export of viral genome by NSP.

The protein resides in the host nucleus. The protein localises to the host cytoplasm. It is found in the host cell membrane. Its function is as follows. Binds to the genomic viral ssDNA, shuttles it into and out of the cell nucleus. Begomoviruses use 2 proteins to transport their DNA from cell to cell. The nuclear shuttle protein (NSP) shuttles it between nucleus and cytoplasm and the movement protein (MP) probably transports the DNA-NSP complex to the cell periphery and facilitates movement across the cell wall. This chain is Nuclear shuttle protein, found in Hewittia sublobata (Coralbush).